Reading from the N-terminus, the 324-residue chain is HSF-like protein (324 aa).

The signal sequence occupies residues 1-19; that stretch reads MNSLVALVLLGQIIGSTVS. Cystatin fetuin-A-type domains lie at 21–130 and 141–254; these read QLGP…VKCS and RDCP…SDCV. 6 disulfides stabilise this stretch: Cys-28–Cys-315, Cys-85–Cys-96, Cys-110–Cys-129, Cys-143–Cys-146, Cys-205–Cys-217, and Cys-230–Cys-253. An N-linked (GlcNAc...) asparagine glycan is attached at Asn-95. The N-linked (GlcNAc...) asparagine glycan is linked to Asn-204. Asn-282 carries an N-linked (GlcNAc...) asparagine glycan.

This sequence belongs to the fetuin family. Homodimer. Expressed by the liver.

It is found in the secreted. In terms of biological role, may not have antihemorrhagic activity. This chain is HSF-like protein, found in Protobothrops flavoviridis (Habu).